Consider the following 112-residue polypeptide: 87 kDa annexin-binding protein (112 aa).

As to quaternary structure, binds annexin.

The sequence is that of 87 kDa annexin-binding protein from Physarum polycephalum (Slime mold).